We begin with the raw amino-acid sequence, 514 residues long: MDKFQRDGKEDTSRQWRFLYPLLFQEDLYTIAYDHYSNRSSSLEPMGNSSSNDRFSFLTVKRSISRIRQQNGSIVPFVNCDQNKLVGHNKSFYSELVLGGLTAIPGVPFSIRSKHPLEEXNEWTSFRSIHSIFPLMEDKIPHSNFILDIRIPHLTHPEILVRTFRRWIQDAPSLHSLRSVLHEHRNLIISSNLDQLILIASKENTRLSLFLWNYYAYECESLLVPLWKRFSHSRSLPYESFIERTPFYRKIEHIAIFYHKYLKKSLWFLKDPSIHYVKYRERSIIALRGTYLLVKKWRYHLTNFWQCHFHLWLQPYRIYIDELSNNGFSFLGYLLSAKMXPPVVKNKTVDDPFIPVLIXKGFDPAAPVXFLIGSLVKEKFCDISGHPFSRLAWTGLTDDDILDRFDRIWRNIFHYHSGSSKKDGLYHMKYILRLPCAKTLACKHKSAIRVVRERFGSELFTKSFPKERESIFLPFSKTRSQRERIWHSDIIQRNPSVNPWWKEHNLRIEPLFDR.

Belongs to the intron maturase 2 family. MatK subfamily.

The protein resides in the plastid. It is found in the chloroplast. Usually encoded in the trnK tRNA gene intron. Probably assists in splicing its own and other chloroplast group II introns. In Lepidozamia peroffskyana (Peroffsky's lepidozamia), this protein is Maturase K.